The chain runs to 131 residues: Profilin-2 (131 aa).

Belongs to the profilin family. As to quaternary structure, occurs in many kinds of cells as a complex with monomeric actin in a 1:1 ratio.

It is found in the cytoplasm. Its subcellular location is the cytoskeleton. In terms of biological role, binds to actin and affects the structure of the cytoskeleton. At high concentrations, profilin prevents the polymerization of actin, whereas it enhances it at low concentrations. By binding to PIP2, it inhibits the formation of IP3 and DG. The polypeptide is Profilin-2 (PRO2) (Triticum aestivum (Wheat)).